The following is a 419-amino-acid chain: Mitogen-activated protein kinase pmk-2 (419 aa).

In terms of domain architecture, Protein kinase spans 49 to 350 (YNSLKPLGEG…VSSALRHDYL (302 aa)). Residues 55-63 (LGEGAYGVV) and Lys-78 each bind ATP. The active-site Proton acceptor is the Asp-210. Thr-222 bears the Phosphothreonine mark. The TXY motif lies at 222-224 (TGY). A Phosphotyrosine modification is found at Tyr-224.

This sequence belongs to the protein kinase superfamily. CMGC Ser/Thr protein kinase family. MAP kinase subfamily. Mg(2+) serves as cofactor. Dually phosphorylated on Thr-222 and Tyr-224, which activates the enzyme.

It is found in the cytoplasm. It catalyses the reaction L-seryl-[protein] + ATP = O-phospho-L-seryl-[protein] + ADP + H(+). It carries out the reaction L-threonyl-[protein] + ATP = O-phospho-L-threonyl-[protein] + ADP + H(+). Activated by phosphorylation on threonine and tyrosine. Inhibited by pyridinyl-imidazole related compounds. Its function is as follows. Responds to activation by environmental stress and pro-inflammatory cytokines by phosphorylating downstream targets. This is Mitogen-activated protein kinase pmk-2 (pmk-2) from Caenorhabditis elegans.